The sequence spans 1382 residues: Hepatocyte growth factor receptor (1382 aa).

The signal sequence occupies residues Met1 to Gly24. At Glu25–Thr933 the chain is on the extracellular side. Residues Arg27–Leu516 enclose the Sema domain. Asn45 carries an N-linked (GlcNAc...) asparagine glycan. 4 disulfide bridges follow: Cys95–Cys101, Cys98–Cys160, Cys133–Cys141, and Cys173–Cys176. An N-linked (GlcNAc...) asparagine glycan is attached at Asn106. Residues Asn203 and Asn359 are each glycosylated (N-linked (GlcNAc...) asparagine). Disulfide bonds link Cys299–Cys364 and Cys386–Cys398. Residues Asn400 and Asn406 are each glycosylated (N-linked (GlcNAc...) asparagine). 4 disulfide bridges follow: Cys521–Cys539, Cys527–Cys562, Cys530–Cys546, and Cys542–Cys552. 3 IPT/TIG domains span residues Pro564–Val656, Pro658–Gln740, and Pro743–Val837. Thr583 carries an O-linked (Man) threonine glycan. 2 N-linked (GlcNAc...) asparagine glycosylation sites follow: Asn608 and Asn636. Thr677 and Thr762 each carry an O-linked (Man) threonine glycan. N-linked (GlcNAc...) asparagine glycans are attached at residues Asn786, Asn880, and Asn931. The helical transmembrane segment at Gly934–Leu956 threads the bilayer. Residues Lys957 to Thr1382 lie on the Cytoplasmic side of the membrane. At Ser967 the chain carries Phosphoserine. A Phosphothreonine modification is found at Thr978. Ser991, Ser998, and Ser1001 each carry phosphoserine. Tyr1004 carries the post-translational modification Phosphotyrosine. The Protein kinase domain maps to Val1079–Ile1346. ATP is bound by residues Ile1085 to Val1093 and Lys1111. The Proton acceptor role is filled by Asp1205. Residues Leu1213–Thr1382 are interaction with RANBP9. The residue at position 1231 (Tyr1231) is a Phosphotyrosine. Tyr1235 and Tyr1236 each carry phosphotyrosine; by autocatalysis. The residue at position 1290 (Thr1290) is a Phosphothreonine. Residues Trp1321–Val1360 form an interaction with MUC20 region. Phosphotyrosine; by autocatalysis is present on residues Tyr1350 and Tyr1357. Phosphotyrosine is present on Tyr1366.

Belongs to the protein kinase superfamily. Tyr protein kinase family. In terms of assembly, heterodimer made of an alpha chain (50 kDa) and a beta chain (145 kDa) which are disulfide linked. Binds PLXNB1. Interacts when phosphorylated with downstream effectors including STAT3, PIK3R1, SRC, PCLG1, GRB2 and GAB1. Interacts with SPSB1, SPSB2 and SPSB4. Interacts with INPP5D/SHIP1. When phosphorylated at Tyr-1357, interacts with INPPL1/SHIP2. Interacts with RANBP9 and RANBP10, as well as SPSB1, SPSB2, SPSB3 and SPSB4. SPSB1 binding occurs in the presence and in the absence of HGF, however HGF treatment has a positive effect on this interaction. Interacts with MUC20; prevents interaction with GRB2 and suppresses hepatocyte growth factor-induced cell proliferation. Interacts with GRB10. Interacts with PTPN1 and PTPN2. Interacts with HSP90AA1 and HSP90AB1; the interaction suppresses MET kinase activity. Interacts with tensin TNS3. Interacts (when phosphorylated) with tensin TNS4 (via SH2 domain); the interaction increases MET protein stability by inhibiting MET endocytosis and subsequent lysosomal degradation. In terms of processing, autophosphorylated in response to ligand binding on Tyr-1235 and Tyr-1236 in the kinase domain leading to further phosphorylation of Tyr-1350 and Tyr-1357 in the C-terminal multifunctional docking site. Dephosphorylated by PTPRJ at Tyr-1350 and Tyr-1366. Dephosphorylated by PTPN1 and PTPN2. Post-translationally, ubiquitinated. Ubiquitination by CBL regulates the receptor stability and activity through proteasomal degradation. O-mannosylation of IPT/TIG domains by TMEM260 is required for protein maturation. O-mannosylated residues are composed of single mannose glycans that are not elongated or modified.

The protein resides in the membrane. It catalyses the reaction L-tyrosyl-[protein] + ATP = O-phospho-L-tyrosyl-[protein] + ADP + H(+). Its activity is regulated as follows. In its inactive state, the C-terminal tail interacts with the catalytic domain and inhibits the kinase activity. Upon ligand binding, the C-terminal tail is displaced and becomes phosphorylated, thus increasing the kinase activity. Its function is as follows. Receptor tyrosine kinase that transduces signals from the extracellular matrix into the cytoplasm by binding to hepatocyte growth factor/HGF ligand. Regulates many physiological processes including proliferation, scattering, morphogenesis and survival. Ligand binding at the cell surface induces autophosphorylation of MET on its intracellular domain that provides docking sites for downstream signaling molecules. Following activation by ligand, interacts with the PI3-kinase subunit PIK3R1, PLCG1, SRC, GRB2, STAT3 or the adapter GAB1. Recruitment of these downstream effectors by MET leads to the activation of several signaling cascades including the RAS-ERK, PI3 kinase-AKT, or PLCgamma-PKC. The RAS-ERK activation is associated with the morphogenetic effects while PI3K/AKT coordinates prosurvival effects. During embryonic development, MET signaling plays a role in gastrulation, development and migration of muscles and neuronal precursors, angiogenesis and kidney formation. In adults, participates in wound healing as well as organ regeneration and tissue remodeling. Also promotes differentiation and proliferation of hematopoietic cells. The chain is Hepatocyte growth factor receptor (MET) from Felis catus (Cat).